The primary structure comprises 1204 residues: Exportin-5 (1204 aa).

An N-acetylalanine modification is found at Ala-2. Positions 2–108 are necessary for interaction with Ran; that stretch reads AMDQVNALCE…ANGTLNILEE (107 aa). At Lys-396 the chain carries N6-acetyllysine. Residues 533 to 640 are necessary for interaction with ILF3; that stretch reads ELLQMVLNFD…KQLLSNELLL (108 aa). The interval 641–642 is pre-miRNA binding; it reads TQ. Ser-826 is subject to Phosphoserine.

This sequence belongs to the exportin family. Component of a nuclear export receptor complex composed of XPO5, RAN, dsRNA-binding proteins and dsRNA. Found in a nuclear export complex with XPO5, RAN, EEF1A1, and aminoacylated tRNA. Found in a nuclear export complex with XPO5, RAN, ILF3 and dsRNA. Found in a nuclear export complex with XPO5, RAN and pre-miRNA. Found in a nuclear export complex with XPO5, RAN, ILF3 and minihelix VA1 dsRNA. Found in a nuclear export complex with XPO5, RAN, ILF3, ZNF346 and dsRNA. Interacts with EEF1A1, ILF3, NUP153, NUP214 and ZNF346. Interacts with RAN and cargo proteins in a GTP-dependent manner. Interacts with isoform 5 of ADAR/ADAR1 (via DRBM domains). Interacts with SMAD4; mediates nuclear export of SMAD4. Interacts with RAN (GTP-bound form). As to expression, expressed in heart, brain, placenta, lung, skeletal muscle, kidney and pancreas.

It is found in the nucleus. Its subcellular location is the cytoplasm. Its function is as follows. Mediates the nuclear export of proteins bearing a double-stranded RNA binding domain (dsRBD) and double-stranded RNAs (cargos). XPO5 in the nucleus binds cooperatively to the RNA and to the GTPase Ran in its active GTP-bound form. Proteins containing dsRBDs can associate with this trimeric complex through the RNA. Docking of this complex to the nuclear pore complex (NPC) is mediated through binding to nucleoporins. Upon transit of a nuclear export complex into the cytoplasm, hydrolysis of Ran-GTP to Ran-GDP (induced by RANBP1 and RANGAP1, respectively) cause disassembly of the complex and release of the cargo from the export receptor. XPO5 then returns to the nuclear compartment by diffusion through the nuclear pore complex, to mediate another round of transport. The directionality of nuclear export is thought to be conferred by an asymmetric distribution of the GTP- and GDP-bound forms of Ran between the cytoplasm and nucleus. Overexpression may in some circumstances enhance RNA-mediated gene silencing (RNAi). Mediates nuclear export of isoform 5 of ADAR/ADAR1 in a RanGTP-dependent manner. Mediates the nuclear export of micro-RNA precursors, which form short hairpins. Also mediates the nuclear export of synthetic short hairpin RNAs used for RNA interference. In some circumstances can also mediate the nuclear export of deacylated and aminoacylated tRNAs. Specifically recognizes dsRNAs that lack a 5'-overhang in a sequence-independent manner, have only a short 3'-overhang, and that have a double-stranded length of at least 15 base-pairs. Binding is dependent on Ran-GTP. Functionally, (Microbial infection) Mediates the nuclear export of adenovirus VA1 dsRNA. This is Exportin-5 (XPO5) from Homo sapiens (Human).